Reading from the N-terminus, the 133-residue chain is MKPISASIVRALPVGAYLNVADNSGAKVVKLIAVKGYKGRKRRLAKAGIADLVIVSVRDGKPDMIGQIFKAVVVRMKKEWRRRDGTRIKFEDNAVALLKDDYGTPKGTIIKTPIAKEVAERWPDLAKIARIIV.

It belongs to the universal ribosomal protein uL14 family. Part of the 50S ribosomal subunit. Forms a cluster with proteins L3 and L24e, part of which may contact the 16S rRNA in 2 intersubunit bridges.

Binds to 23S rRNA. Forms part of two intersubunit bridges in the 70S ribosome. The polypeptide is Large ribosomal subunit protein uL14 (Nanoarchaeum equitans (strain Kin4-M)).